A 363-amino-acid polypeptide reads, in one-letter code: Transcriptional regulator AacuR (363 aa).

Positions 1–24 (MTSLQCPPPDRTRRSLSPTGPKFR) are disordered. Residues 27–54 (CKSCAASKIRCTKEKPQCARCVKRNMVC) constitute a DNA-binding region (zn(2)-C6 fungal-type). Positions 63 to 72 (RRKPGARLKH) are enriched in basic residues. The segment at 63–104 (RRKPGARLKHRESITTNAHHSPTTTTITTSRTTSSSPSASPK) is disordered. Low complexity predominate over residues 76–102 (ITTNAHHSPTTTTITTSRTTSSSPSAS).

It is found in the nucleus. In terms of biological role, transcriptional regulator; part of the gene cluster that mediates the biosynthesis of the tetrahydroxanthone dimer secalonic acid D. The sequence is that of Transcriptional regulator AacuR from Aspergillus aculeatus (strain ATCC 16872 / CBS 172.66 / WB 5094).